A 479-amino-acid polypeptide reads, in one-letter code: Long-chain acyl-protein thioester reductase (479 aa).

This sequence belongs to the LuxC family.

It carries out the reaction a long-chain fatty aldehyde + NADP(+) + CoA = a long-chain fatty acyl-CoA + NADPH + H(+). Its pathway is lipid metabolism; fatty acid reduction for biolumincescence. Its function is as follows. LuxC is the fatty acid reductase enzyme responsible for synthesis of the aldehyde substrate for the luminescent reaction catalyzed by luciferase. This is Long-chain acyl-protein thioester reductase (luxC) from Aliivibrio fischeri (Vibrio fischeri).